The sequence spans 40 residues: MKVRASVKRMCRNCKVIRRNGVVRVICSDARHKQRQKGGK.

This sequence belongs to the bacterial ribosomal protein bL36 family.

This is Large ribosomal subunit protein bL36 from Coxiella burnetii (strain Dugway 5J108-111).